The sequence spans 354 residues: Homer protein homolog 1 (354 aa).

Residues M1–A110 enclose the WH1 domain. The residue at position 2 (G2) is an N-acetylglycine. The tract at residues K114–F173 is disordered. Polar residues-rich tracts occupy residues S138 to G147 and D155 to F173. A coiled-coil region spans residues K181–E352. The interval K290 to S354 is required for tetramerization. S306 carries the phosphoserine modification.

Belongs to the Homer family. In terms of assembly, tetramer; this tetrameric structure is critical for forming the high-order complex with SHANK1, which in turn is necessary for the structural and functional integrity of dendritic spines. Interacts with GRM1, GRM5, ITPR1, DNM3, RYR1, RYR2 and SHANK3. Interacts with IFT57 and OPHN1. Isoform 1 encodes a coiled-coil structure that mediates homo- and heteromultimerization. Interacts with SHANK1; forms high-order polymerized complex with a mesh-like network structure, at least composed of SHANK1, HOMER1 and DLGAP1; the complex formation is SHANK1 multimerization dependent. Interacts with NFATC4. Interacts with DAGLA (via PPXXF motif); this interaction is required for the cell membrane localization of DAGLA. Interacts with SRGAP2.

It localises to the cytoplasm. The protein localises to the postsynaptic density. The protein resides in the synapse. Its subcellular location is the cell projection. It is found in the dendritic spine. In terms of biological role, postsynaptic density scaffolding protein. Binds and cross-links cytoplasmic regions of GRM1, GRM5, ITPR1, DNM3, RYR1, RYR2, SHANK1 and SHANK3. By physically linking GRM1 and GRM5 with ER-associated ITPR1 receptors, it aids the coupling of surface receptors to intracellular calcium release. May also couple GRM1 to PI3 kinase through its interaction with AGAP2. Isoform 1 regulates the trafficking and surface expression of GRM5. Isoform 3 acts as a natural dominant negative, in dynamic competition with constitutively expressed isoform 1 to regulate synaptic metabotropic glutamate function. Isoform 3, may be involved in the structural changes that occur at synapses during long-lasting neuronal plasticity and development. Forms a high-order complex with SHANK1, which in turn is necessary for the structural and functional integrity of dendritic spines. Negatively regulates T cell activation by inhibiting the calcineurin-NFAT pathway. Acts by competing with calcineurin/PPP3CA for NFAT protein binding, hence preventing NFAT activation by PPP3CA. This Homo sapiens (Human) protein is Homer protein homolog 1.